The following is a 299-amino-acid chain: tRNA dimethylallyltransferase (299 aa).

ATP is bound at residue 11-18; it reads GPTAVGKT. 13–18 lines the substrate pocket; it reads TAVGKT. An interaction with substrate tRNA region spans residues 36–39; it reads DSQQ.

This sequence belongs to the IPP transferase family. In terms of assembly, monomer. Mg(2+) serves as cofactor.

It carries out the reaction adenosine(37) in tRNA + dimethylallyl diphosphate = N(6)-dimethylallyladenosine(37) in tRNA + diphosphate. In terms of biological role, catalyzes the transfer of a dimethylallyl group onto the adenine at position 37 in tRNAs that read codons beginning with uridine, leading to the formation of N6-(dimethylallyl)adenosine (i(6)A). This is tRNA dimethylallyltransferase from Streptococcus pyogenes serotype M6 (strain ATCC BAA-946 / MGAS10394).